The chain runs to 236 residues: MGSVDPSRLSLVLFARLSGLVVAVSVLYWALFLPNLGLSYSTLHPLLMVIGFILVSGEAILIHRWLPGSRKTKKAVHLWLQGMALASAVFGIWTKFHYQRGVFANFYSLHSWMGLLSVSLFAAQWVTGFMSFWHRGEVRTTRTTFLPWHVFLGLYTYGLAIATAETGLLEKLTFLQTKRNVPRRGSESMTVNGLGLGLALLGCIVITAAILPKYQSHSRDEKLVYSSQDRPKCLSS.

Residues 14 to 210 (FARLSGLVVA…LGCIVITAAI (197 aa)) enclose the Cytochrome b561 domain. 3 consecutive transmembrane segments (helical) span residues 17-37 (LSGL…PNLG), 42-62 (TLHP…AILI), and 76-96 (VHLW…WTKF). Positions 44, 77, and 110 each coordinate heme b. 3 consecutive transmembrane segments (helical) span residues 112 to 132 (WMGL…FMSF), 144 to 164 (TFLP…IATA), and 191 to 211 (VNGL…AAIL). Heme b is bound at residue histidine 149.

Homodimer. Heme b is required as a cofactor.

It is found in the membrane. The catalysed reaction is Fe(3+)(out) + L-ascorbate(in) = monodehydro-L-ascorbate radical(in) + Fe(2+)(out) + H(+). Functionally, two-heme-containing cytochrome. May catalyze ascorbate-dependent trans-membrane ferric-chelate reduction. The polypeptide is Probable transmembrane ascorbate ferrireductase 4 (CYB561D) (Arabidopsis thaliana (Mouse-ear cress)).